We begin with the raw amino-acid sequence, 366 residues long: Carbamoyl phosphate synthase small chain (366 aa).

The interval 1-174 (MQEIPAILVL…GERYTVDNPD (174 aa)) is CPSase. The L-glutamine site is built by Ser48, Gly226, and Gly228. Residues 178 to 366 (HVVAFDYGIK…FTELMERLKN (189 aa)) enclose the Glutamine amidotransferase type-1 domain. Cys256 serves as the catalytic Nucleophile. The L-glutamine site is built by Leu257, Gln260, Asn298, Gly300, and Phe301. Active-site residues include His340 and Glu342.

Belongs to the CarA family. Composed of two chains; the small (or glutamine) chain promotes the hydrolysis of glutamine to ammonia, which is used by the large (or ammonia) chain to synthesize carbamoyl phosphate. Tetramer of heterodimers (alpha,beta)4.

The catalysed reaction is hydrogencarbonate + L-glutamine + 2 ATP + H2O = carbamoyl phosphate + L-glutamate + 2 ADP + phosphate + 2 H(+). It catalyses the reaction L-glutamine + H2O = L-glutamate + NH4(+). Its pathway is amino-acid biosynthesis; L-arginine biosynthesis; carbamoyl phosphate from bicarbonate: step 1/1. It functions in the pathway pyrimidine metabolism; UMP biosynthesis via de novo pathway; (S)-dihydroorotate from bicarbonate: step 1/3. Its function is as follows. Small subunit of the glutamine-dependent carbamoyl phosphate synthetase (CPSase). CPSase catalyzes the formation of carbamoyl phosphate from the ammonia moiety of glutamine, carbonate, and phosphate donated by ATP, constituting the first step of 2 biosynthetic pathways, one leading to arginine and/or urea and the other to pyrimidine nucleotides. The small subunit (glutamine amidotransferase) binds and cleaves glutamine to supply the large subunit with the substrate ammonia. This Chlorobaculum tepidum (strain ATCC 49652 / DSM 12025 / NBRC 103806 / TLS) (Chlorobium tepidum) protein is Carbamoyl phosphate synthase small chain.